A 102-amino-acid chain; its full sequence is Iron-sulfur cluster assembly protein CyaY (102 aa).

It belongs to the frataxin family.

In terms of biological role, involved in iron-sulfur (Fe-S) cluster assembly. May act as a regulator of Fe-S biogenesis. The chain is Iron-sulfur cluster assembly protein CyaY from Actinobacillus succinogenes (strain ATCC 55618 / DSM 22257 / CCUG 43843 / 130Z).